Reading from the N-terminus, the 479-residue chain is Glycerol kinase 5 (479 aa).

ATP-binding residues include Ser20 and Ser21. 3 residues coordinate glycerol: Arg90, Asp267, and Gln268. ATP-binding residues include Thr289, Gly332, and Gly432.

The protein belongs to the FGGY kinase family.

Its subcellular location is the cytoplasm. The catalysed reaction is glycerol + ATP = sn-glycerol 3-phosphate + ADP + H(+). It functions in the pathway polyol metabolism; glycerol degradation via glycerol kinase pathway; sn-glycerol 3-phosphate from glycerol: step 1/1. Functionally, skin-specific kinase that plays a key role in glycerol metabolism, catalyzing its phosphorylation to produce sn-glycerol 3-phosphate. Involved in skin-specific regulation of sterol regulatory element-binding protein (SREBP) processing and lipid biosynthesis. In Xenopus laevis (African clawed frog), this protein is Glycerol kinase 5 (gk5).